Consider the following 81-residue polypeptide: Defensin-like protein 43 (81 aa).

The signal sequence occupies residues 1–27 (MGITKTSVTFLFLLILAAFVSNYNVLA). 4 disulfides stabilise this stretch: cysteine 40-cysteine 79, cysteine 44-cysteine 67, cysteine 53-cysteine 77, and cysteine 57-cysteine 78.

Belongs to the DEFL family.

Its subcellular location is the secreted. This chain is Defensin-like protein 43, found in Arabidopsis thaliana (Mouse-ear cress).